A 307-amino-acid polypeptide reads, in one-letter code: Protein FAM76A (307 aa).

Disordered regions lie at residues 142-195 (QRKH…ESIT) and 287-307 (KQAA…ITSP). Residues 161-182 (SRLSGGSHYNSQKTLSTSSIQN) show a composition bias toward polar residues. Positions 217–299 (IIAQLKEEVA…AALSKSKKSE (83 aa)) form a coiled coil.

The protein belongs to the FAM76 family.

The polypeptide is Protein FAM76A (FAM76A) (Bos taurus (Bovine)).